Consider the following 637-residue polypeptide: Sodium-dependent phosphate transport protein 2A (637 aa).

Topologically, residues 1–103 (MMSYSERLGG…LAQVGTKLLK (103 aa)) are cytoplasmic. Residues S14 and S34 each carry the phosphoserine modification. Residues 104–125 (VPLMLAFLYLFVCSLDVLSSAF) form a helical membrane-spanning segment. Residues 126–145 (QLAGGKVAGDIFKDNAILSN) lie on the Extracellular side of the membrane. A helical transmembrane segment spans residues 146–163 (PVAGLVVGILVTVLVQSS). Topologically, residues 164 to 165 (ST) are cytoplasmic. A helical membrane pass occupies residues 166-185 (STSIIVSMVSSGLLEVSSAI). Residues 186–345 (PIIMGSNIGT…HIFVDTGLPD (160 aa)) are Extracellular-facing. 2 disulfides stabilise this stretch: C225/C520 and C306/C334. 2 N-linked (GlcNAc...) asparagine glycosylation sites follow: N298 and N328. The chain crosses the membrane as a helical span at residues 346–368 (LAVGLILLAGSLVVLCTCLILLV). The Cytoplasmic portion of the chain corresponds to 369 to 410 (KMLNSLLKGQVMSSRRSSTQTDFPAPFTWVTGYFAMVVGASM). A helical membrane pass occupies residues 411–434 (TFVVQSSSVFTSAITPLIGLGVIS). Topologically, residues 435–464 (IERAYPLTLGSNIGTTTTAILAALASPREK) are extracellular. The chain crosses the membrane as a helical span at residues 465–485 (LSSSFQIALCHFFFNISGILL). At 486 to 511 (WYPLPCTRLPIRMAKALGKRTAKYRW) the chain is on the cytoplasmic side. T506 carries the post-translational modification Phosphothreonine; by PKC. The chain crosses the membrane as a helical span at residues 512 to 532 (FAVLYLLVCFLLLPSLVFGIS). Residues 533-537 (MAGWQ) are Extracellular-facing. A helical transmembrane segment spans residues 538 to 559 (AMVGVGTPFGALLAFVVLVNVL). The Cytoplasmic segment spans residues 560–637 (QSRSPGHLPK…LPAHHNATRL (78 aa)). The residue at position 605 (S605) is a Phosphoserine. At T621 the chain carries Phosphothreonine. S623 carries the phosphoserine modification.

The protein belongs to the SLC34A transporter family. Interacts via its C-terminal region with NHERF4. Interacts with NHERF1. Interacts with TMEM174; regulates SLC34A1 internalization by PTH and FGF23. As to expression, kidney.

Its subcellular location is the apical cell membrane. It localises to the cell membrane. The enzyme catalyses 3 Na(+)(out) + phosphate(out) = 3 Na(+)(in) + phosphate(in). In terms of biological role, involved in actively transporting phosphate into cells via Na(+) cotransport in the renal brush border membrane. The cotransport has a Na(+):Pi stoichiometry of 3:1 and is electrogenic. The protein is Sodium-dependent phosphate transport protein 2A of Mus musculus (Mouse).